Here is a 705-residue protein sequence, read N- to C-terminus: Fatty acid oxidation complex subunit alpha (705 aa).

The interval 1-190 is enoyl-CoA hydratase; that stretch reads MSEQKAFNLK…KLGVVDACVP (190 aa). A 3-hydroxyacyl-CoA dehydrogenase region spans residues 308-705; that stretch reads SKVGMVGVLG…AGEGRRFYDN (398 aa).

It in the N-terminal section; belongs to the enoyl-CoA hydratase/isomerase family. In the central section; belongs to the 3-hydroxyacyl-CoA dehydrogenase family. Heterotetramer of two alpha chains (FadJ) and two beta chains (FadI).

It is found in the cytoplasm. The enzyme catalyses a (3S)-3-hydroxyacyl-CoA = a (2E)-enoyl-CoA + H2O. The catalysed reaction is a 4-saturated-(3S)-3-hydroxyacyl-CoA = a (3E)-enoyl-CoA + H2O. It catalyses the reaction a (3S)-3-hydroxyacyl-CoA + NAD(+) = a 3-oxoacyl-CoA + NADH + H(+). It carries out the reaction (3S)-3-hydroxybutanoyl-CoA = (3R)-3-hydroxybutanoyl-CoA. Its pathway is lipid metabolism; fatty acid beta-oxidation. In terms of biological role, catalyzes the formation of a hydroxyacyl-CoA by addition of water on enoyl-CoA. Also exhibits 3-hydroxyacyl-CoA epimerase and 3-hydroxyacyl-CoA dehydrogenase activities. The protein is Fatty acid oxidation complex subunit alpha of Vibrio vulnificus (strain CMCP6).